Reading from the N-terminus, the 168-residue chain is Segregation and condensation protein B (168 aa).

Belongs to the ScpB family. In terms of assembly, homodimer. Homodimerization may be required to stabilize the binding of ScpA to the Smc head domains. Component of a cohesin-like complex composed of ScpA, ScpB and the Smc homodimer, in which ScpA and ScpB bind to the head domain of Smc. The presence of the three proteins is required for the association of the complex with DNA.

Its subcellular location is the cytoplasm. Functionally, participates in chromosomal partition during cell division. May act via the formation of a condensin-like complex containing Smc and ScpA that pull DNA away from mid-cell into both cell halves. The protein is Segregation and condensation protein B of Caldanaerobacter subterraneus subsp. tengcongensis (strain DSM 15242 / JCM 11007 / NBRC 100824 / MB4) (Thermoanaerobacter tengcongensis).